The sequence spans 64 residues: Small ribosomal subunit protein eS17 (64 aa).

It belongs to the eukaryotic ribosomal protein eS17 family.

This chain is Small ribosomal subunit protein eS17, found in Methanosarcina mazei (strain ATCC BAA-159 / DSM 3647 / Goe1 / Go1 / JCM 11833 / OCM 88) (Methanosarcina frisia).